The following is a 170-amino-acid chain: CASP-like protein 1F1 (170 aa).

Topologically, residues 1-16 (MMGDNEGRRTPLLNLG) are cytoplasmic. Residues 17-37 (VQVSMRVLTIGAAMASMWVMI) traverse the membrane as a helical segment. The Extracellular segment spans residues 38–62 (TNREVASVYGIAFEAKYSYSSAFRY). The helical transmembrane segment at 63–83 (LVYAQIAVCAATLFTLVWACL) threads the bilayer. Topologically, residues 84–88 (AVRRR) are cytoplasmic. The helical transmembrane segment at 89–109 (GLVFALFFFDLLTTLTAISAF) threads the bilayer. At 110-141 (SAAFAEGYVGKYGNKQAGWLPICGYVHGYCSR) the chain is on the extracellular side. A helical membrane pass occupies residues 142–162 (VTISLAMSFASFILLFILTVL). At 163–170 (TASAARHY) the chain is on the cytoplasmic side.

It belongs to the Casparian strip membrane proteins (CASP) family. In terms of assembly, homodimer and heterodimers. As to expression, in flowers, expressed in the anther wall.

The protein resides in the cell membrane. The sequence is that of CASP-like protein 1F1 from Arabidopsis thaliana (Mouse-ear cress).